Consider the following 349-residue polypeptide: Probable L-asparaginase periplasmic (349 aa).

The signal sequence occupies residues 1 to 21 (MKLTKLALCTLFGLGVSIANA). Residues 25–349 (PNITILATGG…KVIQQYFEDF (325 aa)) enclose the Asparaginase/glutaminase domain. The active-site O-isoaspartyl threonine intermediate is the threonine 35. Residues serine 81 and 112–113 (TD) each bind substrate. Cysteine 100 and cysteine 128 are oxidised to a cystine.

It belongs to the asparaginase 1 family.

Its subcellular location is the periplasm. The enzyme catalyses L-asparagine + H2O = L-aspartate + NH4(+). This Haemophilus influenzae (strain ATCC 51907 / DSM 11121 / KW20 / Rd) protein is Probable L-asparaginase periplasmic (ansB).